Consider the following 717-residue polypeptide: uncharacterized protein (717 aa).

It belongs to the asfivirus C717R family.

The protein resides in the virion. This is an uncharacterized protein from African swine fever virus (isolate Tick/Malawi/Lil 20-1/1983) (ASFV).